The chain runs to 172 residues: Nicotinamide-nucleotide adenylyltransferase (172 aa).

It belongs to the archaeal NMN adenylyltransferase family.

Its subcellular location is the cytoplasm. The catalysed reaction is beta-nicotinamide D-ribonucleotide + ATP + H(+) = diphosphate + NAD(+). It functions in the pathway cofactor biosynthesis; NAD(+) biosynthesis; NAD(+) from nicotinamide D-ribonucleotide: step 1/1. This chain is Nicotinamide-nucleotide adenylyltransferase, found in Methanococcus aeolicus (strain ATCC BAA-1280 / DSM 17508 / OCM 812 / Nankai-3).